The following is a 130-amino-acid chain: Cholecystokinin (130 aa).

Residues 1–20 (MYIGICICVLLAALSASSTG) form the signal peptide. Residues 21 to 60 (QQTVGSMNEDPGAREIEQQNILQHPRHIRASSSAQLKPFQ) constitute a propeptide that is removed on maturation. Y112 carries the sulfotyrosine modification. Position 118 is a phenylalanine amide (F118). Positions 122 to 130 (SAEEYEYSS) are excised as a propeptide. Sulfotyrosine occurs at positions 126 and 128.

It belongs to the gastrin/cholecystokinin family. The precursor is cleaved by proteases to produce a number of active cholecystokinins. Expressed in brain, lung, testis and throughout the length of the small intestine. In the brain, expressed predominantly in the optic tectum and brain stem.

Its subcellular location is the secreted. Functionally, this peptide hormone induces gall bladder contraction and the release of pancreatic enzymes in the gut. Its function in the brain is not clear. The protein is Cholecystokinin (CCK) of Aquarana catesbeiana (American bullfrog).